The primary structure comprises 182 residues: Small ribosomal subunit protein uS5 (182 aa).

One can recognise an S5 DRBM domain in the interval 16–79; sequence FVDRLVHINR…EAAKRGMIYV (64 aa).

Belongs to the universal ribosomal protein uS5 family. As to quaternary structure, part of the 30S ribosomal subunit. Contacts proteins S4 and S8.

In terms of biological role, with S4 and S12 plays an important role in translational accuracy. Located at the back of the 30S subunit body where it stabilizes the conformation of the head with respect to the body. The sequence is that of Small ribosomal subunit protein uS5 from Bartonella quintana (strain Toulouse) (Rochalimaea quintana).